A 461-amino-acid chain; its full sequence is Elongation factor 1-alpha (461 aa).

G2 carries the n,N,N-trimethylglycine modification. The residue at position 3 (K3) is an N6,N6-dimethyllysine; alternate. An N6-methyllysine; alternate modification is found at K3. The tr-type G domain occupies 6-241 (KTHINVVVIG…DSIEPPKRPT (236 aa)). The G1 stretch occupies residues 15–22 (GHVDSGKS). 15–22 (GHVDSGKS) lines the GTP pocket. Residue K31 is modified to N6-methyllysine. The segment at 71–75 (GITID) is G2. Residue K80 is modified to N6,N6,N6-trimethyllysine. Positions 92–95 (DAPG) are G3. Residues 92-96 (DAPGH) and 154-157 (NKMD) each bind GTP. Residues 154-157 (NKMD) are G4. Residues 193–195 (SGF) are G5. K317 carries the post-translational modification N6,N6-dimethyllysine; alternate. K317 is modified (N6-methyllysine; alternate). K391 is modified (N6-methyllysine).

It belongs to the TRAFAC class translation factor GTPase superfamily. Classic translation factor GTPase family. EF-Tu/EF-1A subfamily.

The protein resides in the cytoplasm. Functionally, this protein promotes the GTP-dependent binding of aminoacyl-tRNA to the A-site of ribosomes during protein biosynthesis. The chain is Elongation factor 1-alpha (TEF) from Pseudoechria curvicolla (Podospora curvicolla).